A 1021-amino-acid chain; its full sequence is Receptor-like protein EIX2 (1021 aa).

Positions 1 to 24 (MGKRTNPRHFLVTWSLLLLETAFG) are cleaved as a signal peptide. Residues 25–109 (LTSREVNKTL…PILTGKVSPS (85 aa)) are N-cap. The Extracellular portion of the chain corresponds to 25–963 (LTSREVNKTL…DDDDEFSSLE (939 aa)). N-linked (GlcNAc...) asparagine glycosylation is present at Asn31. LRR repeat units lie at residues 113 to 136 (LEYL…RFIG), 138 to 161 (LKRL…QFQN), 162 to 184 (LTSL…VWLS), 186 to 211 (LSSL…ITKV), 214 to 237 (LKEL…VANS), and 239 to 262 (LISL…SWLF). N-linked (GlcNAc...) asparagine glycosylation is found at Asn145 and Asn161. The N-linked (GlcNAc...) asparagine glycan is linked to Asn236. Asn263 carries an N-linked (GlcNAc...) asparagine glycan. LRR repeat units lie at residues 265 to 288 (STSL…RFGS), 290 to 313 (MYLE…SFGN), 314 to 337 (LTRL…LFLR), 342 to 365 (RKSL…VTRF), 366 to 388 (SSLK…RVGQ), 389 to 412 (VSSL…LALF), 413 to 436 (PSLR…IGKL), 437 to 459 (SQLR…MGQL), 461 to 483 (NLER…HFSN), 484 to 507 (LSSL…DWVP), 509 to 532 (FQLQ…LQTQ), 533 to 555 (NNYT…WFSN), 557 to 581 (PPEL…IVSK), and 583 to 607 (DYMI…NIQI). N-linked (GlcNAc...) asparagine glycosylation is present at Asn313. A glycan (N-linked (GlcNAc...) asparagine) is linked at Asn483. Asn534, Asn544, Asn564, and Asn593 each carry an N-linked (GlcNAc...) asparagine glycan. The LRR 21; degenerate repeat unit spans residues 608–626 (FYLHKNHFSGSISSICRNT). 6 LRR repeats span residues 627–651 (IGAA…WMNM), 652–675 (SNLA…LGSL), 677–698 (NLEA…FSQC), 699–722 (QLLQ…IGTD), 723–747 (LLQL…ICQL), and 749–773 (FLQI…NFTI). N-linked (GlcNAc...) asparagine glycans are attached at residues Asn650 and Asn663. N-linked (GlcNAc...) asparagine glycans are attached at residues Asn770 and Asn778. LRR repeat units follow at residues 818 to 842 (LLYL…IAEM), 843 to 866 (RGLR…IGQM), 867 to 890 (KLLE…LSNL), and 892 to 913 (FLSV…STQL). N-linked (GlcNAc...) asparagine glycosylation is found at Asn849, Asn856, and Asn889. The segment at 914-963 (QSFDRSSYSGNAQLCGPPLEECPGYAPPIDRGSNTNPQEHDDDDEFSSLE) is C-cap/acidic domain. The chain crosses the membrane as a helical span at residues 964–984 (FYVSMVLGFFVTFWGILGCLI). The Cytoplasmic portion of the chain corresponds to 985–1021 (VNRSWRNAYFTFLTDMKSWLHMTSRVCFARLKGKLRN).

This sequence belongs to the RLP family. Interacts with EIX elicitor protein.

The protein resides in the cell membrane. Involved in plant defense. Confers resistance to the fungal pathogen T.viride through recognition of the EIX elicitor protein. This chain is Receptor-like protein EIX2, found in Solanum lycopersicum (Tomato).